A 94-amino-acid chain; its full sequence is MLKPLGDRVILEAKDEEEQTVGGIVLASNAKEKSQTGKIIAVGNGTVLDNGQTVPMNVKVGDTVVYDKYAGTEVSYEDKKYLVVHEKDLVAVVE.

The protein belongs to the GroES chaperonin family. As to quaternary structure, heptamer of 7 subunits arranged in a ring. Interacts with the chaperonin GroEL.

It localises to the cytoplasm. Functionally, together with the chaperonin GroEL, plays an essential role in assisting protein folding. The GroEL-GroES system forms a nano-cage that allows encapsulation of the non-native substrate proteins and provides a physical environment optimized to promote and accelerate protein folding. GroES binds to the apical surface of the GroEL ring, thereby capping the opening of the GroEL channel. This chain is Co-chaperonin GroES, found in Pediococcus pentosaceus (strain ATCC 25745 / CCUG 21536 / LMG 10740 / 183-1w).